The primary structure comprises 309 residues: Homoserine kinase (309 aa).

ATP is bound at residue 91–101 (PIGSGLGSSAC).

Belongs to the GHMP kinase family. Homoserine kinase subfamily.

It is found in the cytoplasm. The catalysed reaction is L-homoserine + ATP = O-phospho-L-homoserine + ADP + H(+). It participates in amino-acid biosynthesis; L-threonine biosynthesis; L-threonine from L-aspartate: step 4/5. Functionally, catalyzes the ATP-dependent phosphorylation of L-homoserine to L-homoserine phosphate. The chain is Homoserine kinase from Buchnera aphidicola subsp. Acyrthosiphon pisum (strain 5A).